A 452-amino-acid polypeptide reads, in one-letter code: MSLTVWNIESIKDVAEMLGIGNLADEPAAAIAMDLEYRIHQVVQEATKFMVHSKRTVLTSADISSALRTLNVEPLYGFNNSRPLEFHEAAVGAGQNSLYYLDDEEVDFEKIINAPLPKVPRNISYSAHWLAIEGVQPAIPQNPTPSDHTVGEWASKGTSGVMPGASTAAKEARNGVTSMDNVEIKPLVRHVLSKELQLYFERITSALLDETNVELRDAALSSLRDDPGLHQLLPYFIMFLSDSVTRNLGNLVVLTTLMHMAWALLDNPNLFVEPYVQQLMPSILTCLVAKRLGSDPNNHEHYALRDLAAFLLGIVCDRFGNVYYTLKPRVTRTALKAFLDNTKPYSTHYGAIKGLKTMGKEAIRVLVVPNIKVYEVLVRKTLEKGNEEEIYEANKCMDALYDALLLLRDDQLPNQRTLPPNASGLLEKNVGSLMAEKIMKENDTSLLLGLLE.

The Histone-fold domain occupies 4–68; it reads TVWNIESIKD…TSADISSALR (65 aa).

The protein belongs to the TAF6 family. As to quaternary structure, component of the 1.8 MDa SAGA (Spt-Ada-Gcn5 acetyltransferase) complex, which is composed of 19 subunits tra1, spt7, taf5, ngg1/ada3, sgf73, spt20, spt8, taf12, taf6, hfi1/ada1, ubp8, gcn5, ada2, spt3, sgf29, taf10, taf9, sgf11 and sus1. The SAGA complex is composed of 4 modules, namely the HAT (histone acetyltransferase) module (gcn5, ada2, ngg1/ada3 and sgf29), the DUB (deubiquitinating) module (ubp8, sgf11, sgf73 and sus1), the core or TAF (TBP-associated factor) module (taf5, taf6, taf9, taf10 and taf12), and the Tra1 or SPT (Suppressor of Ty) module (tra1, hfi1/ada1, spt3, spt7, spt8 and spt20). The Tra1/SPT module binds activators, the core module recruits TBP (TATA-binding protein), the HAT module contains the histone H3 acetyltransferase gcn5, and the DUB module comprises the histone H2B deubiquitinase ubp8. Interacts with gcn5, taf5 and taf73. Component of the 1.2 MDa TFIID complex, which is composed of TATA-binding protein (TBP) and the 14 TBP-associated factors (TAFs). It comprises 1 copy of each taf1, taf2, taf3, taf7, taf8, taf11, taf13, 2 copies of each taf4, taf5, taf6, taf9, taf10, taf12, and 3 copies of taf14. In TFIID, taf6 heterodimerizes with taf9, forming ultimately an octamer consisting of a taf6-taf9 heterotetramer core flanked by taf4-taf12 dimers on either side, similar to the histone H2A-H2B-H3-H4 octamer.

It localises to the nucleus. Functionally, functions as a component of both the DNA-binding general transcription initiation factor complex TFIID and the transcription coactivator SAGA complex. Binding of TFIID to a promoter (with or without TATA element) is the initial step in pre-initiation complex (PIC) formation. TFIID plays a key role in the regulation of gene expression by RNA polymerase II through different activities such as transcription activator interaction, core promoter recognition and selectivity, TFIIA and TFIIB interaction, chromatin modification (histone acetylation by TAF1), facilitation of DNA opening and initiation of transcription. SAGA acts as a general cofactor required for essentially all RNA polymerase II transcription. At the promoters, SAGA is required for transcription pre-initiation complex (PIC) recruitment. It influences RNA polymerase II transcriptional activity through different activities such as TBP interaction (via core/TAF module) and promoter selectivity, interaction with transcription activators (via Tra1/SPT module), and chromatin modification through histone acetylation (via HAT module) and deubiquitination (via DUB module). SAGA preferentially acetylates histones H3 (to form H3K9ac, H3K14ac, H3K18ac and H3K23ac) and H2B and deubiquitinates histone H2B. SAGA interacts with DNA via upstream activating sequences (UASs). This is SAGA complex/transcription factor TFIID complex subunit Taf6 from Schizosaccharomyces pombe (strain 972 / ATCC 24843) (Fission yeast).